The primary structure comprises 229 residues: Large ribosomal subunit protein bL25 (229 aa).

Disordered regions lie at residues Met1–Arg21 and Pro187–Asp229. Acidic residues predominate over residues Ser196–Ala207.

The protein belongs to the bacterial ribosomal protein bL25 family. CTC subfamily. In terms of assembly, part of the 50S ribosomal subunit; part of the 5S rRNA/L5/L18/L25 subcomplex. Contacts the 5S rRNA. Binds to the 5S rRNA independently of L5 and L18.

This is one of the proteins that binds to the 5S RNA in the ribosome where it forms part of the central protuberance. The sequence is that of Large ribosomal subunit protein bL25 from Erythrobacter litoralis (strain HTCC2594).